A 166-amino-acid polypeptide reads, in one-letter code: Lipoprotein signal peptidase (166 aa).

The next 3 helical transmembrane spans lie at 12-32 (WLWL…LILQ), 70-90 (WFFA…MYRS), and 102-122 (ALII…GFVV). Catalysis depends on residues Asp123 and Asp141. A helical transmembrane segment spans residues 137-157 (FNLADSAICIGAALIVLEGFL).

The protein belongs to the peptidase A8 family.

It localises to the cell inner membrane. It catalyses the reaction Release of signal peptides from bacterial membrane prolipoproteins. Hydrolyzes -Xaa-Yaa-Zaa-|-(S,diacylglyceryl)Cys-, in which Xaa is hydrophobic (preferably Leu), and Yaa (Ala or Ser) and Zaa (Gly or Ala) have small, neutral side chains.. The protein operates within protein modification; lipoprotein biosynthesis (signal peptide cleavage). Its function is as follows. This protein specifically catalyzes the removal of signal peptides from prolipoproteins. In Salmonella agona (strain SL483), this protein is Lipoprotein signal peptidase.